A 349-amino-acid polypeptide reads, in one-letter code: MAAEEEEVDSADTGERSGWLTGWLPTWCPTSTSHLKEAEEKMLKCVPCTYKKEPVHISNGNKIWTLKFSHNISNKTPLVLLHGFGGGLGLWALNFGDLCTNRPVYAFDLLGFGRSSRPRFDSDAEEVENQFVESIEEWRCALGLDKMILLGHNLGGFLAAAYSLKYPSRVNHLILVEPWGFPERPDLADQDRPIPVWIRALGAALTPFNPLAGLRIAGPFGLSLVQRLRPDFKRKYSSMFEDDTVTEYIYHCNVQTPSGETAFKNMTIPYGWAKRPMLQRIGKMHPDIPVSVIFGARSCIDGNSGTSIQSLRPHSYVKTIAILGAGHYVYADQPEEFNQKVKEICDTVD.

Alanine 2 carries the N-acetylalanine modification. Residues 77–184 form the AB hydrolase-1 domain; that stretch reads PLVLLHGFGG…LVEPWGFPER (108 aa). Phosphoserine is present on serine 122. An HXXXXD motif motif is present at residues 327 to 332; that stretch reads HYVYAD.

Belongs to the peptidase S33 family. ABHD4/ABHD5 subfamily. In terms of assembly, interacts with ADRP, PLIN and PNPLA2. Interacts with PLIN5; promotes interaction with PNPLA2.

Its subcellular location is the cytoplasm. The protein localises to the lipid droplet. The enzyme catalyses a 1-acyl-sn-glycero-3-phosphate + an acyl-CoA = a 1,2-diacyl-sn-glycero-3-phosphate + CoA. It carries out the reaction 1-(9Z-octadecenoyl)-sn-glycero-3-phosphate + (9Z)-octadecenoyl-CoA = 1,2-di-(9Z-octadecenoyl)-sn-glycero-3-phosphate + CoA. The catalysed reaction is 1-(9Z-octadecenoyl)-sn-glycero-3-phosphate + hexadecanoyl-CoA = 1-(9Z)-octadecenoyl-2-hexadecanoyl-sn-glycero-3-phosphate + CoA. It catalyses the reaction 1-(9Z-octadecenoyl)-sn-glycero-3-phosphate + octadecanoyl-CoA = 1-(9Z-octadecenoyl)-2-octadecanoyl-sn-glycero-3-phosphate + CoA. The enzyme catalyses 1-(9Z-octadecenoyl)-sn-glycero-3-phosphate + (5Z,8Z,11Z,14Z)-eicosatetraenoyl-CoA = 1-(9Z)-octadecenoyl-2-(5Z,8Z,11Z,14Z)-eicosatetraenoyl-sn-glycero-3-phosphate + CoA. It carries out the reaction eicosanoyl-CoA + 1-(9Z-octadecenoyl)-sn-glycero-3-phosphate = 1-(9Z)-octadecenoyl-2-eicosanoyl-sn-glycero-3-phosphate + CoA. The catalysed reaction is 1-hexadecanoyl-sn-glycero-3-phosphate + (9Z)-octadecenoyl-CoA = 1-hexadecanoyl-2-(9Z-octadecenoyl)-sn-glycero-3-phosphate + CoA. It catalyses the reaction 1-octadecanoyl-sn-glycero-3-phosphate + (9Z)-octadecenoyl-CoA = 1-octadecanoyl-2-(9Z-octadecenoyl)-sn-glycero-3-phosphate + CoA. The enzyme catalyses 1-(5Z,8Z,11Z,14Z-eicosatetraenoyl)-sn-glycero-3-phosphate + (9Z)-octadecenoyl-CoA = 1-(5Z,8Z,11Z,14Z)-eicosatetraenoyl-2-(9Z)-octadecenoyl-sn-glycero-3-phosphate + CoA. Acyltransferase activity is inhibited by detergents such as Triton X-100 and 3-[(3-cholamidopropyl)dimethylammonio]-1-propanesulfonate (CHAPS). Acyltransferase activity is inhibited by the presence of magnesium and calcium. Its function is as follows. Coenzyme A-dependent lysophosphatidic acid acyltransferase that catalyzes the transfer of an acyl group on a lysophosphatidic acid. Functions preferentially with 1-oleoyl-lysophosphatidic acid followed by 1-palmitoyl-lysophosphatidic acid, 1-stearoyl-lysophosphatidic acid and 1-arachidonoyl-lysophosphatidic acid as lipid acceptor. Functions preferentially with arachidonoyl-CoA followed by oleoyl-CoA as acyl group donors. Functions in phosphatidic acid biosynthesis. May regulate the cellular storage of triacylglycerol through activation of the phospholipase PNPLA2. Involved in keratinocyte differentiation. Regulates lipid droplet fusion. This chain is 1-acylglycerol-3-phosphate O-acyltransferase ABHD5, found in Pongo abelii (Sumatran orangutan).